The chain runs to 123 residues: Holo-[acyl-carrier-protein] synthase (123 aa).

The Mg(2+) site is built by D8 and E55.

It belongs to the P-Pant transferase superfamily. AcpS family. It depends on Mg(2+) as a cofactor.

It localises to the cytoplasm. It catalyses the reaction apo-[ACP] + CoA = holo-[ACP] + adenosine 3',5'-bisphosphate + H(+). Its function is as follows. Transfers the 4'-phosphopantetheine moiety from coenzyme A to a Ser of acyl-carrier-protein. In Solidesulfovibrio magneticus (strain ATCC 700980 / DSM 13731 / RS-1) (Desulfovibrio magneticus), this protein is Holo-[acyl-carrier-protein] synthase.